A 218-amino-acid polypeptide reads, in one-letter code: MKADFWLQRWSAGQIGFHQSEVNKDLQQYWSSLNVVPGARVLVPLCGKSQDMSWLSGQGYHVVGAELSEAAVERYFTERGEQPHITSQGDFKVYAAPGIEIWCGDFFALTARDIGHCAAFYDRAAMIALPADMRERYVQHLEALMPQACSGLLITLEYDQALLEGPPFSVPQTWLHRVMSGNWEVTKVGGQDTLHSSARGLKAGLERMDEHVYVLERV.

S-adenosyl-L-methionine contacts are provided by Trp-10, Leu-45, Glu-66, and Arg-123.

This sequence belongs to the class I-like SAM-binding methyltransferase superfamily. TPMT family.

The protein localises to the cytoplasm. It carries out the reaction S-adenosyl-L-methionine + a thiopurine = S-adenosyl-L-homocysteine + a thiopurine S-methylether.. In terms of biological role, involved in the biological cycling of tellurium and selenium. Tellurium resistance (Ter) mechanism. The protein is Thiopurine S-methyltransferase of Pseudomonas syringae pv. pisi.